Here is a 425-residue protein sequence, read N- to C-terminus: Protein CLP1 homolog (425 aa).

Residues Glu18, Lys59, and 121–126 (DVGKST) each bind ATP.

The protein belongs to the Clp1 family. Clp1 subfamily.

It localises to the nucleus. Functionally, required for endonucleolytic cleavage during polyadenylation-dependent pre-mRNA 3'-end formation. This Drosophila ananassae (Fruit fly) protein is Protein CLP1 homolog (cbc).